The sequence spans 341 residues: Ketol-acid reductoisomerase (NADP(+)) (341 aa).

A KARI N-terminal Rossmann domain is found at 2 to 181 (AKVYYNGDAN…GAARAGVLET (180 aa)). Residues 25-28 (YGSQ), arginine 48, serine 52, and 82-85 (DEKQ) each bind NADP(+). The active site involves histidine 107. Glycine 133 contacts NADP(+). The region spanning 182-327 (TFKEETETDL…RELRSMMPFV (146 aa)) is the KARI C-terminal knotted domain. Residues aspartate 190, glutamate 194, glutamate 226, and glutamate 230 each contribute to the Mg(2+) site. Serine 251 provides a ligand contact to substrate.

It belongs to the ketol-acid reductoisomerase family. It depends on Mg(2+) as a cofactor.

The catalysed reaction is (2R)-2,3-dihydroxy-3-methylbutanoate + NADP(+) = (2S)-2-acetolactate + NADPH + H(+). It carries out the reaction (2R,3R)-2,3-dihydroxy-3-methylpentanoate + NADP(+) = (S)-2-ethyl-2-hydroxy-3-oxobutanoate + NADPH + H(+). It participates in amino-acid biosynthesis; L-isoleucine biosynthesis; L-isoleucine from 2-oxobutanoate: step 2/4. Its pathway is amino-acid biosynthesis; L-valine biosynthesis; L-valine from pyruvate: step 2/4. Involved in the biosynthesis of branched-chain amino acids (BCAA). Catalyzes an alkyl-migration followed by a ketol-acid reduction of (S)-2-acetolactate (S2AL) to yield (R)-2,3-dihydroxy-isovalerate. In the isomerase reaction, S2AL is rearranged via a Mg-dependent methyl migration to produce 3-hydroxy-3-methyl-2-ketobutyrate (HMKB). In the reductase reaction, this 2-ketoacid undergoes a metal-dependent reduction by NADPH to yield (R)-2,3-dihydroxy-isovalerate. The chain is Ketol-acid reductoisomerase (NADP(+)) from Geobacillus kaustophilus (strain HTA426).